The sequence spans 282 residues: Heme oxygenase 1, chloroplastic (282 aa).

The N-terminal 54 residues, 1 to 54, are a transit peptide targeting the chloroplast; the sequence is MAYLAPISSSLSIFKNPQLSRFQFSSSSPNPLFLRPRIQILSMTMNKSPSLVVV. His86 lines the heme b pocket.

Belongs to the heme oxygenase family. In terms of tissue distribution, widely expressed.

It is found in the plastid. The protein resides in the chloroplast. The catalysed reaction is heme b + 3 reduced [NADPH--hemoprotein reductase] + 3 O2 = biliverdin IXalpha + CO + Fe(2+) + 3 oxidized [NADPH--hemoprotein reductase] + 3 H2O + H(+). With respect to regulation, activated by ascorbate. Functionally, key enzyme in the synthesis of the chromophore of the phytochrome family of plant photoreceptors. Catalyzes the opening of the heme ring to form the open-chain tetrapyrrole biliverdin IX with the release of iron and carbon monoxide (CO). Produces specifically the biliverdin IX-alpha isomer. Can form complex with heme, is ferredoxin-dependent and its activity is increased in the presence of ascorbate. Plays a role in salt acclimation signaling. May affect the plastid-to-nucleus signaling pathway by perturbing tetrapyrrole synthesis. The plastid-to-nucleus signal plays an important role in the coordinated expression of both nuclear- and chloroplast-localized genes that encode photosynthesis-related proteins. The chain is Heme oxygenase 1, chloroplastic (HO1) from Arabidopsis thaliana (Mouse-ear cress).